The sequence spans 401 residues: O-methyltransferase mfmE (401 aa).

Residues 243 to 244 (GG) and D268 each bind S-adenosyl-L-methionine. H308 functions as the Proton acceptor in the catalytic mechanism.

It belongs to the class I-like SAM-binding methyltransferase superfamily. Cation-independent O-methyltransferase family. COMT subfamily.

It functions in the pathway secondary metabolite biosynthesis; terpenoid biosynthesis. In terms of biological role, O-methyltransferase; part of the gene cluster that mediates the biosynthesis of the phthalide-terpenoid hybrid 11'-O-desmethylfendlerol. Within the pathway, mfmE catalyzes the 7-O-methylation of the phthalide 5,7-dihydroxy-4-(hydroxymethyl)-6-methylphthalide to yield 5-hydroxy-4-(hydroxymethyl)-7-methoxy-6-methylphthalide. The biosynthesis of 11'-O-desmethylfendlerol begins with the NR-PKS mfmB that forms 3,5-dimethylorsellinic acid (DMOA), which is then transformed into the phthalide 5,7-dihydroxy-4-(hydroxymethyl)-6-methylphthalide by the cytochrome P450 monooxygenase mfmA and the hydrolase mfmC. Subsequently, the methyltransferase mfmE catalyzes 7-O-methylation to yield 5-hydroxy-4-(hydroxymethyl)-7-methoxy-6-methylphthalide, which undergoes C-3 hydroxylation by the cytochrome P450 monooxygenase mfmF. The resultant cyclopolic acid (2,5-dihydroxy-4-(hydroxymethyl)-7-methoxy-6-methylphthalide) is then farnesylated by the DMATS-type prenyltransferase mfmD to afford 5-O-farnesylcyclopolic acid. Finally, the Pyr4-family terpene cyclase mfmH cyclizes the farnesyl moiety of 5-O-farnesylcyclopolic acid into a drimane-like structure, thus completing the biosynthesis of 11'-O-desmethylfendlerol. This is O-methyltransferase mfmE from Annulohypoxylon moriforme (Filamentous fungus).